Here is a 945-residue protein sequence, read N- to C-terminus: Leucine--tRNA ligase (945 aa).

The short motif at 43–53 is the 'HIGH' region element; it reads PYPNGAIHIGH. The 'KMSKS' region signature appears at 638–642; the sequence is KMSKS. Position 641 (Lys641) interacts with ATP.

The protein belongs to the class-I aminoacyl-tRNA synthetase family.

It is found in the cytoplasm. The catalysed reaction is tRNA(Leu) + L-leucine + ATP = L-leucyl-tRNA(Leu) + AMP + diphosphate. The sequence is that of Leucine--tRNA ligase from Pyrobaculum neutrophilum (strain DSM 2338 / JCM 9278 / NBRC 100436 / V24Sta) (Thermoproteus neutrophilus).